A 506-amino-acid chain; its full sequence is Cytochrome P450 52B1 (506 aa).

A heme-binding site is contributed by Cys451.

Belongs to the cytochrome P450 family. The cofactor is heme.

Its function is as follows. Together with an NADPH cytochrome P450 the enzyme system catalyzes the terminal hydroxylation as the first step in the assimilation of alkanes and fatty acids. This chain is Cytochrome P450 52B1 (CYP52B1), found in Candida tropicalis (Yeast).